The primary structure comprises 83 residues: Small ribosomal subunit protein bS18 (83 aa).

Belongs to the bacterial ribosomal protein bS18 family. In terms of assembly, part of the 30S ribosomal subunit. Forms a tight heterodimer with protein bS6.

Functionally, binds as a heterodimer with protein bS6 to the central domain of the 16S rRNA, where it helps stabilize the platform of the 30S subunit. The protein is Small ribosomal subunit protein bS18 of Methylobacterium radiotolerans (strain ATCC 27329 / DSM 1819 / JCM 2831 / NBRC 15690 / NCIMB 10815 / 0-1).